The chain runs to 210 residues: Na(+)-translocating NADH-quinone reductase subunit D (210 aa).

The next 6 helical transmembrane spans lie at 14–34 (PIVN…ALAV), 42–62 (LVMA…ISMI), 72–92 (IIVQ…LLQA), 103–123 (VFVG…AYAM), 131–151 (FMDG…VGFV), and 178–198 (NGLL…IWII).

The protein belongs to the NqrDE/RnfAE family. Composed of six subunits; NqrA, NqrB, NqrC, NqrD, NqrE and NqrF.

It localises to the cell inner membrane. The enzyme catalyses a ubiquinone + n Na(+)(in) + NADH + H(+) = a ubiquinol + n Na(+)(out) + NAD(+). Functionally, NQR complex catalyzes the reduction of ubiquinone-1 to ubiquinol by two successive reactions, coupled with the transport of Na(+) ions from the cytoplasm to the periplasm. NqrA to NqrE are probably involved in the second step, the conversion of ubisemiquinone to ubiquinol. This chain is Na(+)-translocating NADH-quinone reductase subunit D, found in Shewanella oneidensis (strain ATCC 700550 / JCM 31522 / CIP 106686 / LMG 19005 / NCIMB 14063 / MR-1).